A 383-amino-acid chain; its full sequence is Queuine tRNA-ribosyltransferase (383 aa).

Aspartate 95 functions as the Proton acceptor in the catalytic mechanism. Residues 95 to 99 (DSGGF), aspartate 149, glutamine 195, and glycine 222 contribute to the substrate site. The tract at residues 253–259 (GVGSPDS) is RNA binding. Aspartate 272 functions as the Nucleophile in the catalytic mechanism. An RNA binding; important for wobble base 34 recognition region spans residues 277–281 (TRIAR). Cysteine 310, cysteine 312, cysteine 315, and histidine 341 together coordinate Zn(2+).

This sequence belongs to the queuine tRNA-ribosyltransferase family. Homodimer. Within each dimer, one monomer is responsible for RNA recognition and catalysis, while the other monomer binds to the replacement base PreQ1. Zn(2+) serves as cofactor.

The catalysed reaction is 7-aminomethyl-7-carbaguanine + guanosine(34) in tRNA = 7-aminomethyl-7-carbaguanosine(34) in tRNA + guanine. It functions in the pathway tRNA modification; tRNA-queuosine biosynthesis. Catalyzes the base-exchange of a guanine (G) residue with the queuine precursor 7-aminomethyl-7-deazaguanine (PreQ1) at position 34 (anticodon wobble position) in tRNAs with GU(N) anticodons (tRNA-Asp, -Asn, -His and -Tyr). Catalysis occurs through a double-displacement mechanism. The nucleophile active site attacks the C1' of nucleotide 34 to detach the guanine base from the RNA, forming a covalent enzyme-RNA intermediate. The proton acceptor active site deprotonates the incoming PreQ1, allowing a nucleophilic attack on the C1' of the ribose to form the product. After dissociation, two additional enzymatic reactions on the tRNA convert PreQ1 to queuine (Q), resulting in the hypermodified nucleoside queuosine (7-(((4,5-cis-dihydroxy-2-cyclopenten-1-yl)amino)methyl)-7-deazaguanosine). The sequence is that of Queuine tRNA-ribosyltransferase from Shouchella clausii (strain KSM-K16) (Alkalihalobacillus clausii).